The following is a 99-amino-acid chain: Protein translation factor SUI1 homolog (99 aa).

This sequence belongs to the SUI1 family.

The sequence is that of Protein translation factor SUI1 homolog from Picrophilus torridus (strain ATCC 700027 / DSM 9790 / JCM 10055 / NBRC 100828 / KAW 2/3).